The chain runs to 213 residues: Large ribosomal subunit protein uL3 (213 aa).

Residues 131-168 form a disordered region; the sequence is GPMSHGSKNHRLPGSTGAGTTPGRVYPGKRMAGRSGND.

The protein belongs to the universal ribosomal protein uL3 family. In terms of assembly, part of the 50S ribosomal subunit. Forms a cluster with proteins L14 and L19.

Its function is as follows. One of the primary rRNA binding proteins, it binds directly near the 3'-end of the 23S rRNA, where it nucleates assembly of the 50S subunit. This is Large ribosomal subunit protein uL3 from Synechococcus elongatus (strain ATCC 33912 / PCC 7942 / FACHB-805) (Anacystis nidulans R2).